The primary structure comprises 343 residues: Calcium/calmodulin-dependent protein kinase type 1B (343 aa).

The Protein kinase domain maps to 15-270 (YEIRERLGSG…CQQALRHLWI (256 aa)). Residues 21–29 (LGSGAFSEV) and lysine 44 each bind ATP. The active-site Proton acceptor is aspartate 136. A calmodulin-binding region spans residues 290–311 (KNFARTHWKRAFNATSFLRHIR). The interval 319 to 343 (GEGASEQGMARHSHSGLRAGQPPKW) is disordered.

It belongs to the protein kinase superfamily. CAMK Ser/Thr protein kinase family. CaMK subfamily. Post-translationally, phosphorylated by CAMKK1.

The protein resides in the cytoplasm. The protein localises to the nucleus. It catalyses the reaction L-seryl-[protein] + ATP = O-phospho-L-seryl-[protein] + ADP + H(+). It carries out the reaction L-threonyl-[protein] + ATP = O-phospho-L-threonyl-[protein] + ADP + H(+). Activated by Ca(2+)/calmodulin. Its function is as follows. Calcium/calmodulin-dependent protein kinase belonging to a proposed calcium-triggered signaling cascade. In vitro phosphorylates CREB1 and SYN1/synapsin I. Phosphorylates and activates CAMK1. The polypeptide is Calcium/calmodulin-dependent protein kinase type 1B (PNCK) (Homo sapiens (Human)).